A 186-amino-acid chain; its full sequence is GMP synthase [glutamine-hydrolyzing] subunit A (186 aa).

The region spanning 2-186 (SIVIINNFGQ…ENFNKICENY (185 aa)) is the Glutamine amidotransferase type-1 domain. Cys-76 acts as the Nucleophile in catalysis. Active-site residues include His-163 and Glu-165.

In terms of assembly, heterodimer composed of a glutamine amidotransferase subunit (A) and a GMP-binding subunit (B).

It catalyses the reaction XMP + L-glutamine + ATP + H2O = GMP + L-glutamate + AMP + diphosphate + 2 H(+). It functions in the pathway purine metabolism; GMP biosynthesis; GMP from XMP (L-Gln route): step 1/1. In terms of biological role, catalyzes the synthesis of GMP from XMP. This Methanosphaera stadtmanae (strain ATCC 43021 / DSM 3091 / JCM 11832 / MCB-3) protein is GMP synthase [glutamine-hydrolyzing] subunit A.